A 500-amino-acid polypeptide reads, in one-letter code: Transcription termination/antitermination protein NusA (500 aa).

In terms of domain architecture, S1 motif spans 135 to 205 (GEIVTGVVKK…RGAQLFVTRS (71 aa)). One can recognise a KH domain in the interval 307–373 (KHTMDIAVEA…FTKYLDIDEE (67 aa)). Repeat copies occupy residues 369 to 419 (DIDE…KNAL) and 444 to 494 (GLDR…RNIC). Positions 369–494 (DIDEEFATVL…ELIMAARNIC (126 aa)) are 2 X 51 AA approximate repeats.

This sequence belongs to the NusA family. As to quaternary structure, monomer. Binds directly to the core enzyme of the DNA-dependent RNA polymerase and to nascent RNA.

It localises to the cytoplasm. Functionally, participates in both transcription termination and antitermination. This chain is Transcription termination/antitermination protein NusA, found in Salmonella typhimurium (strain LT2 / SGSC1412 / ATCC 700720).